The primary structure comprises 137 residues: Small ribosomal subunit protein uS12 (137 aa).

The interval 1–43 (MPTINQLVRKGRVSKTKKSDSPALNKGYNSFKKRMTDQNAPQK) is disordered.

This sequence belongs to the universal ribosomal protein uS12 family. In terms of assembly, part of the 30S ribosomal subunit. Contacts proteins S8 and S17. May interact with IF1 in the 30S initiation complex.

With S4 and S5 plays an important role in translational accuracy. In terms of biological role, interacts with and stabilizes bases of the 16S rRNA that are involved in tRNA selection in the A site and with the mRNA backbone. Located at the interface of the 30S and 50S subunits, it traverses the body of the 30S subunit contacting proteins on the other side and probably holding the rRNA structure together. The combined cluster of proteins S8, S12 and S17 appears to hold together the shoulder and platform of the 30S subunit. The chain is Small ribosomal subunit protein uS12 from Oceanobacillus iheyensis (strain DSM 14371 / CIP 107618 / JCM 11309 / KCTC 3954 / HTE831).